We begin with the raw amino-acid sequence, 279 residues long: MWGSGELLVAWFLVLAAGGTTEHVYRPSRRVCTVGVSGGSISETFVQRVYQPYLTTCDGHRACSTYRTIYRTAYRIAYRHSPGLTPSRPRYACCPGWKRTNGLPGACGAAICQPPCGNEGSCIRPGRCRCPVGWQGDTCQIDVDECSTGEARCPQRCVNTVGSYWCQCWEGQSPSADGVLCLPKEGPSPVAPSPTPGVDSVVREEVYKLQARVDVLEQKLQLVLAPLHSLASRSPEHGLQDPGSLLAHSFQQLDRIDSLSEQVSFLEEQLGSCSCKKDL.

Residues 1–21 (MWGSGELLVAWFLVLAAGGTT) form the signal peptide. Residues 28–109 (SRRVCTVGVS…TNGLPGACGA (82 aa)) form the EMI domain. Intrachain disulfides connect Cys32/Cys94, Cys57/Cys63, Cys93/Cys107, Cys112/Cys122, Cys116/Cys128, Cys130/Cys139, Cys146/Cys157, Cys153/Cys166, and Cys168/Cys181. The 33-residue stretch at 108-140 (GAAICQPPCGNEGSCIRPGRCRCPVGWQGDTCQ) folds into the EGF-like 1 domain. Residues 131 to 133 (PVG) carry the Cell attachment site motif. An EGF-like 2; calcium-binding domain is found at 142–182 (DVDECSTGEARCPQRCVNTVGSYWCQCWEGQSPSADGVLCL). Coiled-coil stretches lie at residues 200 to 224 (SVVR…QLVL) and 250 to 274 (FQQL…GSCS).

In terms of assembly, interacts with ITGAV/ITGB3 in an RGD-dependent manner, increasing endothelial cell's motility.

The protein resides in the secreted. It localises to the extracellular space. Its function is as follows. Regulates vascular tubulogenesis in vivo. Inhibits platelet-derived growth factor (PDGF)-BB-induced smooth muscle cell migration and promotes endothelial cell adhesion to the extracellular matrix and angiogenesis. This is Epidermal growth factor-like protein 7 (Egfl7) from Rattus norvegicus (Rat).